Here is a 299-residue protein sequence, read N- to C-terminus: Trans-aconitate 3-methyltransferase (299 aa).

Serine 2 is modified (N-acetylserine).

This sequence belongs to the methyltransferase superfamily. Tam family.

It localises to the cytoplasm. The enzyme catalyses trans-aconitate + S-adenosyl-L-methionine = (E)-2-(methoxycarbonylmethyl)but-2-enedioate + S-adenosyl-L-homocysteine. Functionally, catalyzes the S-adenosylmethionine monomethyl esterification of trans-aconitate and 3-isopropylmalate at high affinity and of other molecules like cis-aconitate, isocitrate, and citrate at lower velocities and affinities. The function of trans-aconitate methylation appears to be in reducing the toxicity of this spontaneous breakdown product of cis-aconitate. The role of 3-isopropylmalate methylation is unclear but may represent a metabolic branch at 3-isopropylmalate, where some of the material is taken in the pathway leading to leucine and some is taken in a pathway to the 3-isopropylmalate methyl ester, a molecule that provides a signal to switch from vegetative to invasive growth in response to amino acid starvation. This is Trans-aconitate 3-methyltransferase (TMT1) from Saccharomyces cerevisiae (strain ATCC 204508 / S288c) (Baker's yeast).